The primary structure comprises 249 residues: Proteasome activator complex subunit 1 (249 aa).

Residues 59 to 102 (APLDIPVPDPVKEKEKEERKKQQEKEEKEEKKKGDEDDKGPPCG) form a disordered region. Over residues 68–98 (PVKEKEKEERKKQQEKEEKEEKKKGDEDDKG) the composition is skewed to basic and acidic residues.

Belongs to the PA28 family. Heterodimer of PSME1 and PSME2, which forms a hexameric ring. PSME1 can form homoheptamers.

In terms of biological role, implicated in immunoproteasome assembly and required for efficient antigen processing. The PA28 activator complex enhances the generation of class I binding peptides by altering the cleavage pattern of the proteasome. The chain is Proteasome activator complex subunit 1 (Psme1) from Mus musculus (Mouse).